Consider the following 71-residue polypeptide: Virion membrane protein A13 homolog (71 aa).

A helical membrane pass occupies residues 1–21 (MGIIDTFVITAVTVIIFCLLI). The Virion surface portion of the chain corresponds to 22-70 (YAAYKRYKCIPSPDDRDKVLKSTLNDDTLFNQTLTPDQVKALHRLVTSS).

The protein belongs to the chordopoxvirinae A13 family.

The protein localises to the virion membrane. Essential for the encapsidation of DNA into immature virions (IV) and the subsequent maturation of IV into mature virions (MV). This chain is Virion membrane protein A13 homolog, found in Vertebrata (FPV).